The chain runs to 243 residues: MLISTFVFLLYEVTALSTAIHVTKSYTHTRTGTSFFMYQKEAFYRGRSSTRQFNNTRSPSGRSASRSSNFSHRSSSRDSFSSNRSYSSSLSRSPEEPLRTILVENLTRNVTKEHIAEIFGIYGLIDHIFMPIYKKSELNKGYCYIEYVYHDQAANAVDKMNNAELDGEELFVSIKRFPFESLHKNHKHYENSYRPSRSQNNSHYNDKSFHRSRYSRARSRSPGSNISEYSDQSPPYHSYRHRP.

Positions 48–92 (SSTRQFNNTRSPSGRSASRSSNFSHRSSSRDSFSSNRSYSSSLSR) are disordered. The segment covering 57–92 (RSPSGRSASRSSNFSHRSSSRDSFSSNRSYSSSLSR) has biased composition (low complexity). The RRM domain maps to 99–177 (RTILVENLTR…EELFVSIKRF (79 aa)). The segment at 189–243 (YENSYRPSRSQNNSHYNDKSFHRSRYSRARSRSPGSNISEYSDQSPPYHSYRHRP) is disordered. The segment covering 193–203 (YRPSRSQNNSH) has biased composition (polar residues). Basic residues predominate over residues 210-219 (HRSRYSRARS). Positions 222 to 235 (PGSNISEYSDQSPP) are enriched in polar residues.

The protein belongs to the splicing factor SR family. Component of the active spliceosome.

It localises to the cytoplasm. Its subcellular location is the nucleus. Putative component of the spliceosome which enhances the formation of the ATP-dependent A complex of the spliceosome. may participate in mRNA 3'-end cleavage. Also mediates increase of mRNA abundance and translational efficiency. This Schizosaccharomyces pombe (strain 972 / ATCC 24843) (Fission yeast) protein is RNA-binding protein with serine-rich domain 1 homolog.